The primary structure comprises 234 residues: Nodulation protein NolW (234 aa).

Residues 17–36 form a helical membrane-spanning segment; it reads LLCVGLFLFAGIHTTLGATL.

It localises to the membrane. In terms of biological role, regulates cultivar-specific nodulation of soybean. In Rhizobium fredii (Sinorhizobium fredii), this protein is Nodulation protein NolW (nolW).